A 1556-amino-acid chain; its full sequence is Pentafunctional AROM polypeptide (1556 aa).

The tract at residues 1–387 (MFAEGQIQKV…HEQKASSVAD (387 aa)) is 3-dehydroquinate synthase. Residues 46–48 (DTN), 84–87 (ETSK), 115–117 (GGV), and Asp120 contribute to the NAD(+) site. Residue Arg131 coordinates 7-phospho-2-dehydro-3-deoxy-D-arabino-heptonate. 140-141 (TT) contributes to the NAD(+) binding site. Asp147 and Lys153 together coordinate 7-phospho-2-dehydro-3-deoxy-D-arabino-heptonate. Lys162 contacts NAD(+). Asn163 provides a ligand contact to 7-phospho-2-dehydro-3-deoxy-D-arabino-heptonate. Residues 180–183 (FLET) and Asn191 contribute to the NAD(+) site. Glu195 serves as a coordination point for Zn(2+). 7-phospho-2-dehydro-3-deoxy-D-arabino-heptonate contacts are provided by residues 195–198 (EVIK) and Lys253. Glu263 functions as the Proton acceptor; for 3-dehydroquinate synthase activity in the catalytic mechanism. 7-phospho-2-dehydro-3-deoxy-D-arabino-heptonate contacts are provided by residues 267–271 (RNLLN) and His274. Zn(2+) is bound at residue His274. His278 (proton acceptor; for 3-dehydroquinate synthase activity) is an active-site residue. Residues His290 and Lys359 each coordinate 7-phospho-2-dehydro-3-deoxy-D-arabino-heptonate. His290 serves as a coordination point for Zn(2+). Residues 400–837 (VGEAPVGDKK…WDVLSGVFNV (438 aa)) form an EPSP synthase region. Residue Cys819 is the For EPSP synthase activity of the active site. The tract at residues 858 to 1049 (PSIFIVGMRG…HKDQFTSFLS (192 aa)) is shikimate kinase. 864-871 (GMRGAGKT) provides a ligand contact to ATP. The 3-dehydroquinase stretch occupies residues 1050-1266 (LTFPDVSIAA…AAPGQLSVEE (217 aa)). The active-site Proton acceptor; for 3-dehydroquinate dehydratase activity is the His1171. Lys1200 serves as the catalytic Schiff-base intermediate with substrate; for 3-dehydroquinate dehydratase activity. Positions 1279–1556 (KNLSFFIVGT…EVGEKAVLGN (278 aa)) are shikimate dehydrogenase.

This sequence in the N-terminal section; belongs to the sugar phosphate cyclases superfamily. Dehydroquinate synthase family. The protein in the 2nd section; belongs to the EPSP synthase family. In the 3rd section; belongs to the shikimate kinase family. It in the 4th section; belongs to the type-I 3-dehydroquinase family. This sequence in the C-terminal section; belongs to the shikimate dehydrogenase family. In terms of assembly, homodimer. The cofactor is Zn(2+).

The protein localises to the cytoplasm. It carries out the reaction 7-phospho-2-dehydro-3-deoxy-D-arabino-heptonate = 3-dehydroquinate + phosphate. It catalyses the reaction 3-dehydroquinate = 3-dehydroshikimate + H2O. The enzyme catalyses shikimate + NADP(+) = 3-dehydroshikimate + NADPH + H(+). The catalysed reaction is shikimate + ATP = 3-phosphoshikimate + ADP + H(+). It carries out the reaction 3-phosphoshikimate + phosphoenolpyruvate = 5-O-(1-carboxyvinyl)-3-phosphoshikimate + phosphate. Its pathway is metabolic intermediate biosynthesis; chorismate biosynthesis; chorismate from D-erythrose 4-phosphate and phosphoenolpyruvate: step 2/7. The protein operates within metabolic intermediate biosynthesis; chorismate biosynthesis; chorismate from D-erythrose 4-phosphate and phosphoenolpyruvate: step 3/7. It functions in the pathway metabolic intermediate biosynthesis; chorismate biosynthesis; chorismate from D-erythrose 4-phosphate and phosphoenolpyruvate: step 4/7. It participates in metabolic intermediate biosynthesis; chorismate biosynthesis; chorismate from D-erythrose 4-phosphate and phosphoenolpyruvate: step 5/7. Its pathway is metabolic intermediate biosynthesis; chorismate biosynthesis; chorismate from D-erythrose 4-phosphate and phosphoenolpyruvate: step 6/7. Its function is as follows. The AROM polypeptide catalyzes 5 consecutive enzymatic reactions in prechorismate polyaromatic amino acid biosynthesis. In Yarrowia lipolytica (strain CLIB 122 / E 150) (Yeast), this protein is Pentafunctional AROM polypeptide.